The chain runs to 238 residues: Probable transcriptional regulatory protein VIBHAR_07036 (238 aa).

Belongs to the TACO1 family.

It localises to the cytoplasm. The chain is Probable transcriptional regulatory protein VIBHAR_07036 from Vibrio campbellii (strain ATCC BAA-1116).